The following is a 577-amino-acid chain: Proline--tRNA ligase (577 aa).

It belongs to the class-II aminoacyl-tRNA synthetase family. ProS type 1 subfamily. As to quaternary structure, homodimer.

It localises to the cytoplasm. It catalyses the reaction tRNA(Pro) + L-proline + ATP = L-prolyl-tRNA(Pro) + AMP + diphosphate. Functionally, catalyzes the attachment of proline to tRNA(Pro) in a two-step reaction: proline is first activated by ATP to form Pro-AMP and then transferred to the acceptor end of tRNA(Pro). As ProRS can inadvertently accommodate and process non-cognate amino acids such as alanine and cysteine, to avoid such errors it has two additional distinct editing activities against alanine. One activity is designated as 'pretransfer' editing and involves the tRNA(Pro)-independent hydrolysis of activated Ala-AMP. The other activity is designated 'posttransfer' editing and involves deacylation of mischarged Ala-tRNA(Pro). The misacylated Cys-tRNA(Pro) is not edited by ProRS. The protein is Proline--tRNA ligase of Thermotoga neapolitana (strain ATCC 49049 / DSM 4359 / NBRC 107923 / NS-E).